Consider the following 100-residue polypeptide: NAD(P)H-quinone oxidoreductase subunit 4L, chloroplastic (100 aa).

The next 3 helical transmembrane spans lie at 1 to 21, 30 to 50, and 60 to 80; these read MLENSLILGAYLFCLGIYGLT, LMCLELMLNGVNINLVAFSSF, and VFAIFIIAIAAAEAAIGLAII.

Belongs to the complex I subunit 4L family. NDH is composed of at least 16 different subunits, 5 of which are encoded in the nucleus.

Its subcellular location is the plastid. It localises to the chloroplast thylakoid membrane. It carries out the reaction a plastoquinone + NADH + (n+1) H(+)(in) = a plastoquinol + NAD(+) + n H(+)(out). It catalyses the reaction a plastoquinone + NADPH + (n+1) H(+)(in) = a plastoquinol + NADP(+) + n H(+)(out). Functionally, NDH shuttles electrons from NAD(P)H:plastoquinone, via FMN and iron-sulfur (Fe-S) centers, to quinones in the photosynthetic chain and possibly in a chloroplast respiratory chain. The immediate electron acceptor for the enzyme in this species is believed to be plastoquinone. Couples the redox reaction to proton translocation, and thus conserves the redox energy in a proton gradient. The polypeptide is NAD(P)H-quinone oxidoreductase subunit 4L, chloroplastic (Staurastrum punctulatum (Green alga)).